Reading from the N-terminus, the 642-residue chain is Influenza virus NS1A-binding protein (642 aa).

A BTB domain is found at 1 to 131; the sequence is MIPNGYLMFE…GDYLLSRMDV (131 aa). One can recognise a BACK domain in the interval 132 to 350; the sequence is TSCISYRNFA…MQQDELIEKP (219 aa). The segment at 164–368 is sufficient for AHR interaction and signaling; the sequence is ISEEEEFLKL…SGLGTAEMNG (205 aa). A phosphoserine mark is found at Ser246, Ser277, Ser322, Ser336, and Ser338. The disordered stretch occupies residues 257-281; sequence KPPRENGHKQISSSSTGCLSSPNAT. A compositionally biased stretch (polar residues) spans 265–281; the sequence is KQISSSSTGCLSSPNAT. Kelch repeat units lie at residues 384 to 421, 432 to 469, 481 to 518, 527 to 565, 575 to 612, and 622 to 642; these read TVEC…YVVG, CGEM…YIVG, NCDV…YIIG, NTVE…FVCG, CVEM…YAVG, and TVEV…IFQF.

This sequence belongs to the BTB-kelch protein family. Homodimer; through the BTB domain. Interacts with AHR/Aryl hydrocarbon receptor. Interacts (via BACK domain) with pre-mRNA-binding protein HNRNPK; the interaction is direct. Interacts (via BACK domain) with splicing factor PTBP1; the interaction is direct. Interacts (via Kelch repeats) with RNA polymerase POLR2A (via C-terminal domain). Interacts (via BACK domain) with splicing factor SNRPA; the interaction is indirect. Interacts (via Kelch repeats) with splicing factor SART1. Interacts (via BACK domain) with ALYREF; the interaction is indirect and likely plays a role in mRNA nuclear export. Interacts (via Kelch repeats) with KLHL20 (via Kelch repeats); this interaction blocks the assembly of Cul3-KLHL20 complex. As to quaternary structure, (Microbial infection) Interacts (via BACK domain) with influenza A virus non-structural protein 1 (NS1); the interaction is direct and bridges the interaction between NS1 and HNRNPK.

It is found in the cytoplasm. It localises to the cytoskeleton. The protein localises to the nucleus. Its subcellular location is the nucleoplasm. Its function is as follows. Involved in many cell functions, including pre-mRNA splicing, the aryl hydrocarbon receptor (AHR) pathway, F-actin organization and protein ubiquitination. Plays a role in the dynamic organization of the actin skeleton as a stabilizer of actin filaments by association with F-actin through Kelch repeats. Protects cells from cell death induced by actin destabilization. Functions as modifier of the AHR/Aryl hydrocarbon receptor pathway increasing the concentration of AHR available to activate transcription. In addition, functions as a negative regulator of BCR(KLHL20) E3 ubiquitin ligase complex to prevent ubiquitin-mediated proteolysis of PML and DAPK1, two tumor suppressors. Inhibits pre-mRNA splicing (in vitro). May play a role in mRNA nuclear export. (Microbial infection) Involved in the alternative splicing of influenza A virus M1 mRNA through interaction with HNRNPK, thereby facilitating the generation of viral M2 protein. The BTB and Kelch domains are required for splicing activity. Promotes export of viral M mRNA and RNP via its interaction with mRNA export factor ALYREF. This chain is Influenza virus NS1A-binding protein, found in Homo sapiens (Human).